The following is a 335-amino-acid chain: 3-hydroxyproline 2-epimerase (335 aa).

C91 serves as the catalytic Proton acceptor. Residues 92 to 93, D251, and 256 to 257 each bind substrate; these read GH and GS.

Belongs to the proline racemase family.

It catalyses the reaction trans-3-hydroxy-L-proline = cis-3-hydroxy-D-proline. It carries out the reaction trans-4-hydroxy-L-proline = cis-4-hydroxy-D-proline. Functionally, catalyzes the epimerization of trans-3-hydroxy-L-proline (t3LHyp) to cis-3-hydroxy-D-proline (c3DHyp) in vitro. Can also catalyze the epimerization of trans-4-hydroxy-L-proline (t3LHyp) to cis-4-hydroxy-D-proline (c4DHyp), albeit with 3.6-fold lower efficiency. Displays no proline racemase activity. The polypeptide is 3-hydroxyproline 2-epimerase (Burkholderia multivorans (strain ATCC 17616 / 249)).